The chain runs to 69 residues: DNA gyrase inhibitor YacG (69 aa).

Zn(2+) contacts are provided by C9, C12, C28, and C32. Residues 48–69 (PVSPDAEDELFSGDLEAPHRGH) are disordered.

Belongs to the DNA gyrase inhibitor YacG family. Interacts with GyrB. Zn(2+) serves as cofactor.

Functionally, inhibits all the catalytic activities of DNA gyrase by preventing its interaction with DNA. Acts by binding directly to the C-terminal domain of GyrB, which probably disrupts DNA binding by the gyrase. The protein is DNA gyrase inhibitor YacG of Pseudomonas syringae pv. syringae (strain B728a).